The following is a 460-amino-acid chain: Glutamyl-tRNA reductase (460 aa).

Residues 48 to 51, Ser100, 105 to 107, and Gln111 each bind substrate; these read TCNR and EDQ. Cys49 (nucleophile) is an active-site residue. 180–185 contributes to the NADP(+) binding site; it reads GAGEIG.

Belongs to the glutamyl-tRNA reductase family. In terms of assembly, homodimer.

The enzyme catalyses (S)-4-amino-5-oxopentanoate + tRNA(Glu) + NADP(+) = L-glutamyl-tRNA(Glu) + NADPH + H(+). It participates in porphyrin-containing compound metabolism; protoporphyrin-IX biosynthesis; 5-aminolevulinate from L-glutamyl-tRNA(Glu): step 1/2. Functionally, catalyzes the NADPH-dependent reduction of glutamyl-tRNA(Glu) to glutamate 1-semialdehyde (GSA). The polypeptide is Glutamyl-tRNA reductase (Methanosarcina acetivorans (strain ATCC 35395 / DSM 2834 / JCM 12185 / C2A)).